The following is a 164-amino-acid chain: UPF0114 protein YqhA (164 aa).

Transmembrane regions (helical) follow at residues 15-35, 53-73, and 136-156; these read LLAP…LKFF, LILV…LVMV, and LMWY…MGYL.

Belongs to the UPF0114 family.

It is found in the cell membrane. The sequence is that of UPF0114 protein YqhA from Salmonella agona (strain SL483).